Consider the following 88-residue polypeptide: MKTLLLTLVVVTIVCLDFGYARTCLKTPEVKSEPCPPGQEVCYTKAWCDRMCSFRGKVIELGCAATCPRQEPGKEITCCSTDDCNTHP.

The first 21 residues, 1–21, serve as a signal peptide directing secretion; sequence MKTLLLTLVVVTIVCLDFGYA. 5 disulfide bridges follow: C24-C42, C35-C63, C48-C52, C67-C78, and C79-C84.

The protein belongs to the three-finger toxin family. Long-chain subfamily. Type II alpha-neurotoxin sub-subfamily. Expressed by the venom gland.

The protein localises to the secreted. Functionally, binds with high affinity to muscular (alpha-1/CHRNA1) and neuronal (alpha-7/CHRNA7) nicotinic acetylcholine receptor (nAChR) and inhibits acetylcholine from binding to the receptor, thereby impairing neuromuscular and neuronal transmission. This Demansia vestigiata (Lesser black whip snake) protein is Long neurotoxin LNTX-1.